Reading from the N-terminus, the 266-residue chain is Decarboxylase tropJ (266 aa).

Glu-80 functions as the Proton acceptor in the catalytic mechanism. Zn(2+)-binding residues include Glu-80, His-99, His-101, and His-180.

The protein belongs to the aldolase class II family. The cofactor is Zn(2+).

It functions in the pathway secondary metabolite biosynthesis. Functionally, decarboxylase; part of the gene cluster that mediates the biosynthesis of the tropolone class of fungal maleic anhydrides. The pathway begins with the synthesis of 3-methylorcinaldehyde by the non-reducing polyketide synthase (PKS) tropA. 3-methylorcinaldehyde is the substrate for the FAD-dependent monooxygenase tropB to yield a dearomatized hydroxycyclohexadione. The 2-oxoglutarate-dependent dioxygenase tropC then performs the oxidative ring expansion to provide the first tropolone metabolite stipitaldehyde. Trop D converts stipitaldehyde into stipitacetal which is in turn converted to stipitalide by the short-chain dehydrogenase/reductase tropE. The next steps involve tropF, tropG, tropH, tropI and tropJ to form successive tropolone maleic anhydrides including stipitaldehydic, stipitatonic and stipitatic acids. The sequence is that of Decarboxylase tropJ from Talaromyces stipitatus (strain ATCC 10500 / CBS 375.48 / QM 6759 / NRRL 1006) (Penicillium stipitatum).